The sequence spans 39 residues: Cytochrome b6-f complex subunit 5 (39 aa).

A helical membrane pass occupies residues Leu-5–Ala-25.

Belongs to the PetG family. As to quaternary structure, the 4 large subunits of the cytochrome b6-f complex are cytochrome b6, subunit IV (17 kDa polypeptide, PetD), cytochrome f and the Rieske protein, while the 4 small subunits are PetG, PetL, PetM and PetN. The complex functions as a dimer.

It localises to the plastid. It is found in the chloroplast thylakoid membrane. Functionally, component of the cytochrome b6-f complex, which mediates electron transfer between photosystem II (PSII) and photosystem I (PSI), cyclic electron flow around PSI, and state transitions. PetG is required for either the stability or assembly of the cytochrome b6-f complex. The protein is Cytochrome b6-f complex subunit 5 of Pleurastrum terricola (Filamentous green alga).